Reading from the N-terminus, the 211-residue chain is Transmembrane protein 247 (211 aa).

2 stretches are compositionally biased toward basic and acidic residues: residues 1–10 and 31–45; these read MAMEDREVME and PEGKPKASLDAEVPK. Residues 1–90 form a disordered region; the sequence is MAMEDREVME…AGDGPGLESV (90 aa). The span at 63–73 shows a compositional bias: pro residues; that stretch reads PGPPRSLPPKS. The stretch at 119–148 forms a coiled coil; sequence KYLHQENERQRQHEEVMEQLQQQQQQQQAL. 2 consecutive transmembrane segments (helical) span residues 159–179 and 186–206; these read LLLPQNQFAMFFYCFIFIHII and VFFLFSKHYLFCLAAILLCLI.

Its subcellular location is the membrane. This Mus musculus (Mouse) protein is Transmembrane protein 247 (Tmem247).